Here is a 238-residue protein sequence, read N- to C-terminus: Protein CPn_0658/CP_0089/CPj0658/CpB0684 (238 aa).

This sequence belongs to the chlamydial CPn_0658/CT_538/TC_0825 family.

The chain is Protein CPn_0658/CP_0089/CPj0658/CpB0684 from Chlamydia pneumoniae (Chlamydophila pneumoniae).